Reading from the N-terminus, the 242-residue chain is Small ribosomal subunit protein uS2 (242 aa).

This sequence belongs to the universal ribosomal protein uS2 family.

In Idiomarina loihiensis (strain ATCC BAA-735 / DSM 15497 / L2-TR), this protein is Small ribosomal subunit protein uS2.